The following is a 109-amino-acid chain: UPF0154 protein UPA3_0273 (109 aa).

The helical transmembrane segment at 42-62 (VGLGIGIVLFLIAGLIIGYFI) threads the bilayer.

Belongs to the UPF0154 family.

Its subcellular location is the cell membrane. The protein is UPF0154 protein UPA3_0273 of Ureaplasma parvum serovar 3 (strain ATCC 27815 / 27 / NCTC 11736).